The sequence spans 376 residues: 12-oxophytodienoate reductase 1 (376 aa).

Residues 35 to 37, Ala68, and Gln110 each bind FMN; that span reads PLT. Substrate contacts are provided by residues Ser143 and 187-190; that span reads HGAH. The Proton donor role is filled by Tyr192. FMN is bound at residue Arg239. Arg279 contacts substrate. Residues Gly309 and 330–331 each bind FMN; that span reads GR.

This sequence belongs to the NADH:flavin oxidoreductase/NADH oxidase family. The cofactor is FMN. As to expression, constitutively expressed in roots, leaves, cotyledons, cells culture and to a lower extent in flowers.

It is found in the cytoplasm. The catalysed reaction is (1S,2S)-OPC-8 + NADP(+) = (9S,13S,15Z)-12-oxophyto-10,15-dienoate + NADPH + H(+). It participates in lipid metabolism; oxylipin biosynthesis. In terms of biological role, specifically cleaves olefinic bonds in alpha,beta-unsaturated carbonyls and may be involved in detoxification or modification of these reactive compounds. May be involved in the biosynthesis or metabolism of oxylipin signaling molecules. In vitro, reduces 9R,13R-12-oxophyodienoic acid (9R,13R-OPDA) to 9R,13R-OPC-8:0, but not 9S,13S-OPDA, the natural precursor of jasmonic acid. Also reduces N-ethylmaleimide and maleic acid. The chain is 12-oxophytodienoate reductase 1 (OPR1) from Solanum lycopersicum (Tomato).